Reading from the N-terminus, the 398-residue chain is Argininosuccinate synthase (398 aa).

Position 9 to 17 (9 to 17 (AYSGGLDTS)) interacts with ATP. Tyr85 is an L-citrulline binding site. Gly115 lines the ATP pocket. L-aspartate-binding residues include Thr117, Asn121, and Asp122. An L-citrulline-binding site is contributed by Asn121. Arg125, Ser173, Glu258, and Tyr270 together coordinate L-citrulline.

The protein belongs to the argininosuccinate synthase family. Type 1 subfamily. In terms of assembly, homotetramer.

The protein resides in the cytoplasm. It carries out the reaction L-citrulline + L-aspartate + ATP = 2-(N(omega)-L-arginino)succinate + AMP + diphosphate + H(+). It participates in amino-acid biosynthesis; L-arginine biosynthesis; L-arginine from L-ornithine and carbamoyl phosphate: step 2/3. This chain is Argininosuccinate synthase, found in Streptococcus pneumoniae (strain Hungary19A-6).